Reading from the N-terminus, the 128-residue chain is Ribonuclease P protein component (128 aa).

Belongs to the RnpA family. As to quaternary structure, consists of a catalytic RNA component (M1 or rnpB) and a protein subunit.

It carries out the reaction Endonucleolytic cleavage of RNA, removing 5'-extranucleotides from tRNA precursor.. In terms of biological role, RNaseP catalyzes the removal of the 5'-leader sequence from pre-tRNA to produce the mature 5'-terminus. It can also cleave other RNA substrates such as 4.5S RNA. The protein component plays an auxiliary but essential role in vivo by binding to the 5'-leader sequence and broadening the substrate specificity of the ribozyme. In Prochlorococcus marinus (strain MIT 9312), this protein is Ribonuclease P protein component.